We begin with the raw amino-acid sequence, 428 residues long: Serine--tRNA ligase (428 aa).

An L-serine-binding site is contributed by 235–237 (TAE). Residue 266–268 (RYE) coordinates ATP. E289 provides a ligand contact to L-serine. 353 to 356 (EVSS) provides a ligand contact to ATP. Position 389 (S389) interacts with L-serine.

The protein belongs to the class-II aminoacyl-tRNA synthetase family. Type-1 seryl-tRNA synthetase subfamily. As to quaternary structure, homodimer. The tRNA molecule binds across the dimer.

It is found in the cytoplasm. It carries out the reaction tRNA(Ser) + L-serine + ATP = L-seryl-tRNA(Ser) + AMP + diphosphate + H(+). It catalyses the reaction tRNA(Sec) + L-serine + ATP = L-seryl-tRNA(Sec) + AMP + diphosphate + H(+). Its pathway is aminoacyl-tRNA biosynthesis; selenocysteinyl-tRNA(Sec) biosynthesis; L-seryl-tRNA(Sec) from L-serine and tRNA(Sec): step 1/1. In terms of biological role, catalyzes the attachment of serine to tRNA(Ser). Is also able to aminoacylate tRNA(Sec) with serine, to form the misacylated tRNA L-seryl-tRNA(Sec), which will be further converted into selenocysteinyl-tRNA(Sec). The chain is Serine--tRNA ligase from Blochmanniella pennsylvanica (strain BPEN).